The sequence spans 402 residues: Phosphoglycerate kinase (402 aa).

Substrate contacts are provided by residues 29-31 (DFN), R45, 69-72 (HLGR), R125, and R158. ATP is bound by residues K209, E331, and 357–360 (GGDT).

The protein belongs to the phosphoglycerate kinase family.

It localises to the cytoplasm. It catalyses the reaction (2R)-3-phosphoglycerate + ATP = (2R)-3-phospho-glyceroyl phosphate + ADP. It functions in the pathway carbohydrate degradation; glycolysis; pyruvate from D-glyceraldehyde 3-phosphate: step 2/5. The protein is Phosphoglycerate kinase (pgk) of Helicobacter pylori (strain ATCC 700392 / 26695) (Campylobacter pylori).